A 451-amino-acid chain; its full sequence is Chromosomal replication initiator protein DnaA (451 aa).

The interval 1-72 is domain I, interacts with DnaA modulators; that stretch reads MSLPTSLWDK…TELLDELSDT (72 aa). The segment at 72-114 is domain II; the sequence is TPPQIRLQIGSRSTEMPTKNSHEPSHRKAAAPPAGTTISHTQA. Positions 81–90 are enriched in polar residues; that stretch reads GSRSTEMPTK. The segment at 81 to 106 is disordered; sequence GSRSTEMPTKNSHEPSHRKAAAPPAG. Residues 115-331 form a domain III, AAA+ region region; it reads NINSNFTFDS…GALKRVIANA (217 aa). Residues G159, G161, K162, and T163 each contribute to the ATP site. A domain IV, binds dsDNA region spans residues 332 to 451; that stretch reads HFTGQSITVD…YKNLMRILSG (120 aa).

The protein belongs to the DnaA family. Oligomerizes as a right-handed, spiral filament on DNA at oriC.

Its subcellular location is the cytoplasm. Functionally, plays an essential role in the initiation and regulation of chromosomal replication. ATP-DnaA binds to the origin of replication (oriC) to initiate formation of the DNA replication initiation complex once per cell cycle. Binds the DnaA box (a 9 base pair repeat at the origin) and separates the double-stranded (ds)DNA. Forms a right-handed helical filament on oriC DNA; dsDNA binds to the exterior of the filament while single-stranded (ss)DNA is stabiized in the filament's interior. The ATP-DnaA-oriC complex binds and stabilizes one strand of the AT-rich DNA unwinding element (DUE), permitting loading of DNA polymerase. After initiation quickly degrades to an ADP-DnaA complex that is not apt for DNA replication. Binds acidic phospholipids. This Coxiella burnetii (strain CbuK_Q154) (Coxiella burnetii (strain Q154)) protein is Chromosomal replication initiator protein DnaA.